The sequence spans 365 residues: Gibberellin 20 oxidase 1-A (365 aa).

A Fe2OG dioxygenase domain is found at 199-299 (GNDSIMRLNY…RKSLAFFLCP (101 aa)). Positions 224, 226, and 280 each coordinate Fe cation. The active site involves Arg290.

It belongs to the iron/ascorbate-dependent oxidoreductase family. GA20OX subfamily. The cofactor is Fe cation. It depends on L-ascorbate as a cofactor. Expressed in nodes and the ear of the elongating stem.

It catalyses the reaction gibberellin A12 + 2 2-oxoglutarate + 3 O2 + H(+) = gibberellin A9 + 2 succinate + 3 CO2 + 2 H2O. It carries out the reaction gibberellin A53 + 2 2-oxoglutarate + 3 O2 + H(+) = gibberellin A20 + 2 succinate + 3 CO2 + 2 H2O. Functionally, key oxidase enzyme in the biosynthesis of gibberellin that catalyzes the conversion of GA12 and GA53 to GA9 and GA20 respectively, via a three-step oxidation at C-20 of the GA skeleton. This Triticum aestivum (Wheat) protein is Gibberellin 20 oxidase 1-A (GA20ox1A).